We begin with the raw amino-acid sequence, 520 residues long: Glucose-1-phosphate adenylyltransferase small subunit, chloroplastic (520 aa).

The N-terminal 71 residues, Met1–Ala71, are a transit peptide targeting the chloroplast. Residues Met1–Cys81 are disordered. The segment covering Ser14–Ser27 has biased composition (low complexity). The span at Gln28–Ile51 shows a compositional bias: polar residues.

Belongs to the bacterial/plant glucose-1-phosphate adenylyltransferase family. In terms of assembly, heterotetramer. As to expression, leaves.

It is found in the plastid. It localises to the chloroplast. It carries out the reaction alpha-D-glucose 1-phosphate + ATP + H(+) = ADP-alpha-D-glucose + diphosphate. It participates in glycan biosynthesis; starch biosynthesis. With respect to regulation, activated by 3'phosphoglycerate, inhibited by orthophosphate. Allosteric regulation. Its function is as follows. This protein plays a role in synthesis of starch. It catalyzes the synthesis of the activated glycosyl donor, ADP-glucose from Glc-1-P and ATP. This chain is Glucose-1-phosphate adenylyltransferase small subunit, chloroplastic (AGPS1), found in Brassica napus (Rape).